Here is a 363-residue protein sequence, read N- to C-terminus: Zinc finger CCCH domain-containing protein 53 (363 aa).

A C3H1-type zinc finger spans residues 154–181; that stretch reads KNRPKICSFYTIGQCKRGAECSFRHEMP. An RRM domain is found at 225–310; the sequence is KTLYVGGLNS…PPNEYSHYPS (86 aa). Residues 281-348 form a disordered region; that stretch reads LISQQQNQHS…SYSYPMPPHQ (68 aa). Residues 283 to 297 show a composition bias toward low complexity; it reads SQQQNQHSQMQQYYM. Positions 320-336 are enriched in polar residues; it reads FSTQESDGSSTSENNRA.

This chain is Zinc finger CCCH domain-containing protein 53, found in Arabidopsis thaliana (Mouse-ear cress).